Consider the following 1710-residue polypeptide: MKKIFSKKGESPLGSFARRQRSSAGGGGEPGEGAYSQPGYHVRDRDLGKIHKAASAGNVAKVQQILLLRKNGLNDRDKMNRTALHLACANGHPEVVTLLVDRKCQLNVCDNENRTALMKAVQCQEEKCATILLEHGADPNLADVHGNTALHYAVYNEDISVATKLLLYDANIEAKNKDDLTPLLLAVSGKKQQMVEFLIKKKANVNAVDKLESSHQLISEYKEERIPKHSSQNSNSVDESSEDSLSRLSGKPGVDDSWPTSDDEDLNFDTKNVPKPSLAKLMTASQQSRKNLEATYGTVRTGNRTLFEDRDSDSQDEVVVESLPTTSIKVQCFSHPTYQSPDLLPKPSHKSLANPGLMKEEPTKPGIAKKENGIDIIESAPLEQTNNDNLTYVDEVHKNNRSDMMSALGLGQEEDIESPWDSESISENFPQKYVDPLAGAADGKEKNIGNEQAEDVFYIPSCMSGSRNFKMAKLEDTRNVGMPVAHMESPERYLHLKPTIEMKDSVPNKAGGMKDVQTSKAAEHDLEVASEEEQEREGSENNQPQVEEERKKHRNNEMEVSANIHDGATDDAEDDDDDDGLIQKRKSGETDHQQFPRKENKEYASSGPALQMKEVKSTEKEKRTSKESVNSPVFGKASLLTGGLLQVDDDSSLSEIDEDEGRPTKKTSNEKNKVKNQIQSMDDVDDLTQSSETASEDCELPHSSYKNFMLLIEQLGMECKDSVSLLKIQDAALSCERLLELKKNHCELLTVKIKKMEDKVNVLQRELSETKEIKSQLEHQKVEWERELCSLRFSLNQEEEKRRNADTLYEKIREQLRRKEEQYRKEVEVKQQLELSLQTLEMELRTVKSNLNQVVQERNDAQRQLSREQNARMLQDGILTNHLSKQKEIEMAQKKMNSENSHSHEEEKDLSHKNSMLQEEIAMLRLEIDTIKNQNQEKEKKCFEDLKIVKEKNEDLQKTIKQNEETLTQTISQYNGRLSVLTAENAMLNSKLENEKQSKERLEAEVESYHSRLAAAIHDRDQSETSKRELELAFQRARDECSRLQDKMNFDVSNLKDNNEILSQQLFKTESKLNSLEIEFHHTRDALREKTLGLERVQKDLSQTQCQMKEMEQKYQNEQVKVNKYIGKQESVEERLSQLQSENMLLRQQLDDAHNKADNKEKTVINIQDQFHAIVQKLQAESEKQSLLLEERNKELISECNHLKERQYQYENEKAEREVVVRQLQQELADTLKKQSMSEASLEVTSRYRINLEDETQDLKKKLGQIRNQLQEAQDRHTEAVRCAEKMQDHKQKLEKDNAKLKVTVKKQMDKIEELQKNLLNANLSEDEKEQLKKLMELKQSLECNLDQEMKKNVELEREITGFKNLLKMTRKKLNEYENGEFSFHGDLKTSQFEMDIQINKLKHKIDDLTAELETAGSKCLHLDTKNQILQEELLSMKTVQKKCEKLQKNKKKLEQEVINLRSHIERNMVELGQVKQYKQEIEERARQEIAEKLKEVNLFLQAQAASQENLEQFRENNFASMKSQMELRIKDLESELSKIKTSQEDFNKTELEKYKQLYLEELKVRKSLSSKLTKTNERLAEVNTKLLVEKQQSRSLFTTLTTRPVMEPPCVGNLNNSLDLNRKLIPRENLVISTSNPRASNNSMENYLSKMQQELEKNITRELKEAAAELESGSIASPLGSTDESNLNQDLVWKASREYVQVLKKNYMI.

The tract at residues 1–41 (MKKIFSKKGESPLGSFARRQRSSAGGGGEPGEGAYSQPGYH) is disordered. 2 positions are modified to phosphoserine: serine 11 and serine 15. ANK repeat units follow at residues 45–75 (RDLGKIHKAASAGNVAKVQQILLLRKNGLND), 79–108 (MNRTALHLACANGHPEVVTLLVDRKCQLNV), 112–141 (ENRTALMKAVQCQEEKCATILLEHGADPNL), 145–174 (HGNTALHYAVYNEDISVATKLLLYDANIEA), and 178–207 (DDLTPLLLAVSGKKQQMVEFLIKKKANVNA). Positions 222-274 (KEERIPKHSSQNSNSVDESSEDSLSRLSGKPGVDDSWPTSDDEDLNFDTKNVP) are disordered. Phosphoserine is present on residues serine 241, serine 261, serine 489, and serine 530. The interval 504–630 (DSVPNKAGGM…EKRTSKESVN (127 aa)) is disordered. Positions 529–566 (ASEEEQEREGSENNQPQVEEERKKHRNNEMEVSANIHD) form a coiled coil. Acidic residues predominate over residues 569 to 580 (TDDAEDDDDDDG). 2 stretches are compositionally biased toward basic and acidic residues: residues 586 to 602 (KSGETDHQQFPRKENKE) and 613 to 626 (KEVKSTEKEKRTSK). Serine 631 is modified (phosphoserine). Over residues 650 to 660 (DSSLSEIDEDE) the composition is skewed to acidic residues. The disordered stretch occupies residues 650–698 (DSSLSEIDEDEGRPTKKTSNEKNKVKNQIQSMDDVDDLTQSSETASEDC). Basic and acidic residues predominate over residues 661–673 (GRPTKKTSNEKNK). Coiled coils occupy residues 743–873 (KNHC…NARM), 905–1472 (EEEK…MVEL), 1517–1587 (NNFA…NTKL), and 1649–1674 (LSKMQQELEKNITRELKEAAAELESG). Positions 892 to 912 (AQKKMNSENSHSHEEEKDLSH) are disordered.

In terms of assembly, interacts with TRIO. Interacts with GPS2. Interacts with CCDC85B. Interacts with HMMR.

Acts as a regulator of adipogenesis. Involved in the regulation of the feeding behavior. The polypeptide is Ankyrin repeat domain-containing protein 26 (Homo sapiens (Human)).